Reading from the N-terminus, the 253-residue chain is Low affinity immunoglobulin gamma Fc region receptor III-A (253 aa).

The first 20 residues, 1–20 (MGQPLPPVALLLLVSASSRA), serve as a signal peptide directing secretion. The Extracellular portion of the chain corresponds to 21 to 207 (ADVPKALVLL…ISSSVLPWHQ (187 aa)). Ig-like C2-type domains are found at residues 24 to 90 (PKAL…YRCQ) and 99 to 189 (PVQL…VTIT). Disulfide bonds link Cys47/Cys89 and Cys128/Cys172. N-linked (GlcNAc...) asparagine glycans are attached at residues Asn56, Asn63, Asn165, and Asn180. The chain crosses the membrane as a helical span at residues 208-226 (IAFCLVMGLLLAADTGLYF). At 227–253 (SVQRDLRSSQRARKEHTLGWSLGSQDK) the chain is on the cytoplasmic side.

Forms a heterooligomeric complex with ITAM-containing signaling subunits FCER1G. Interacts (via transmembrane domain) with signaling subunits; this interaction is a prerequisite for receptor complex expression on the cell surface and intracellular signal transduction. Binds the Fc region of antigen-complexed IgG.

It localises to the cell membrane. Its function is as follows. Receptor for the invariable Fc fragment of immunoglobulin gamma (IgG). Optimally activated upon binding of clustered antigen-IgG complexes displayed on cell surfaces, triggers lysis of antibody-coated cells, a process known as antibody-dependent cellular cytotoxicity (ADCC). Does not bind free monomeric IgG, thus avoiding inappropriate effector cell activation in the absence of antigenic trigger. Mediates IgG effector functions on natural killer (NK) cells. Binds antigen-IgG complexes generated upon infection and triggers NK cell-dependent cytokine production and degranulation to limit viral load and propagation. Fc-binding subunit that associates with FCER1G adapter to form functional signaling complexes. Following the engagement of antigen-IgG complexes, triggers phosphorylation of immunoreceptor tyrosine-based activation motif (ITAM)-containing adapters with subsequent activation of phosphatidylinositol 3-kinase signaling and sustained elevation of intracellular calcium that ultimately drive NK cell activation. Mediates enhanced ADCC in response to afucosylated IgGs. In Oryctolagus cuniculus (Rabbit), this protein is Low affinity immunoglobulin gamma Fc region receptor III-A.